A 1112-amino-acid chain; its full sequence is Zinc finger protein 654 (1112 aa).

The segment at 482–514 is disordered; it reads PSSSLKKRVDQQSVEEDQSTGETDPDDASVVQP. Residues 494 to 508 show a composition bias toward acidic residues; the sequence is SVEEDQSTGETDPDD. C2H2-type zinc fingers lie at residues 566–588, 738–763, 779–801, 807–831, and 836–860; these read FACV…LKNH, FKCP…RTVH, GKCK…LNRH, YFCL…TKSH, and AQCS…EAQH. Disordered stretches follow at residues 885–906 and 997–1018; these read FSNE…KYST and VESQ…NLTS. Composition is skewed to polar residues over residues 886 to 899 and 1002 to 1018; these read SNEN…VSTS and HSAL…NLTS. Residues serine 1107 and serine 1111 each carry the phosphoserine modification.

This sequence belongs to the krueppel C2H2-type zinc-finger protein family.

It localises to the nucleus. Its function is as follows. May be involved in transcriptional regulation. The sequence is that of Zinc finger protein 654 from Mus musculus (Mouse).